The primary structure comprises 306 residues: Follistatin-related protein 1 (306 aa).

The N-terminal stretch at 1 to 18 is a signal peptide; sequence MWKRWLALSLVTIALVHG. A Follistatin-like domain is found at 28-51; sequence ICANVFCGAGRECAVTEKGEPTCL. 5 disulfides stabilise this stretch: C29–C40, C34–C50, C52–C82, C56–C75, and C64–C96. Residues 46–98 form the Kazal-like domain; that stretch reads GEPTCLCIEQCKPHKRPVCGSNGKTYLNHCELHRDACLTGSKIQVDYDGHCKE. An N-linked (GlcNAc...) asparagine glycan is attached at N142. The 35-residue stretch at 142 to 176 folds into the EF-hand 1 domain; sequence NYSEILDKYFKSFDNGDSHLDSSEFLKFVEQNETA. A Phosphoserine modification is found at S163. 2 N-linked (GlcNAc...) asparagine glycosylation sites follow: N173 and N178. One can recognise an EF-hand 2 domain in the interval 191–226; it reads LRSLCVDALIELSDENADWKLSFQEFLKCLNPSFNP. The VWFC domain occupies 231–285; that stretch reads CALEDETYADGAETEVDCNRCVCSCGHWVCTAMTCDGKNQKGVQTHTEEEKTGYV.

Homodimer. Interacts with SCN10A. Interacts with DIP2A; DIP2A may act as a cell surface receptor for FSTL1. Interacts with BMP4. Interacts with CD14; this interaction promotes TL4-mediated signaling cascade. As to expression, during central nervous system development, strongly expressed in the telencephalon, diencephalon, brainstem, limbic system and spinal cord. Widely expressed in all organs.

The protein localises to the secreted. Secreted glycoprotein that is involved in various physiological processes, such as angiogenesis, regulation of the immune response, cell proliferation and differentiation. Plays a role in the development of the central nervous system, skeletal system, lungs, and ureter. Promotes endothelial cell survival, migration and differentiation into network structures in an AKT-dependent manner. Also promotes survival of cardiac myocytes. Initiates various signaling cascades by activating different receptors on the cell surface such as DIP2A, TLR4 or BMP receptors. The polypeptide is Follistatin-related protein 1 (Fstl1) (Mus musculus (Mouse)).